Consider the following 412-residue polypeptide: BURP domain-containing protein 13 (412 aa).

Positions 1–23 (MARFLLLLVAVAAAAAVLSLGDA) are cleaved as a signal peptide. The BURP domain maps to 190–406 (FFHEEAVRVG…PYGHIVWAKN (217 aa)). A glycan (N-linked (GlcNAc...) asparagine) is linked at Asn-369.

In terms of tissue distribution, specifically expressed in anthers, in the tapetum and microspores (at protein level).

In terms of biological role, required for pollen development. Probably synthesized in the tapetum, packaged in Ubisch bodies and transported at appropriate stages to the micropsores. This Oryza sativa subsp. japonica (Rice) protein is BURP domain-containing protein 13 (BURP13).